Reading from the N-terminus, the 809-residue chain is Quinate/shikimate dehydrogenase (quinone) (809 aa).

5 helical membrane-spanning segments follow: residues 14–34, 41–61, 68–88, 90–110, and 127–147; these read VWCF…VIGG, GGSW…FFMF, VWLY…DAGF, FWPL…VMLT, and AYVI…GMFI.

Belongs to the bacterial PQQ dehydrogenase family. Pyrroloquinoline quinone serves as cofactor.

Its subcellular location is the cell membrane. The enzyme catalyses L-quinate + a quinone = 3-dehydroquinate + a quinol. It catalyses the reaction shikimate + a quinone = 3-dehydroshikimate + a quinol. It functions in the pathway aromatic compound metabolism; 3,4-dihydroxybenzoate biosynthesis; 3-dehydroquinate from D-quinate (PQQ route): step 1/1. Functionally, can act either on quinate or on shikimate. The chain is Quinate/shikimate dehydrogenase (quinone) (quiA) from Acinetobacter baylyi (strain ATCC 33305 / BD413 / ADP1).